The following is a 398-amino-acid chain: Acetate kinase 1 (398 aa).

Mg(2+) is bound at residue N9. K16 lines the ATP pocket. R89 is a substrate binding site. The active-site Proton donor/acceptor is the D146. Residues 206-210 (HLGNG), 281-283 (DCR), and 329-333 (GIGEN) contribute to the ATP site. Residue E384 participates in Mg(2+) binding.

The protein belongs to the acetokinase family. In terms of assembly, homodimer. It depends on Mg(2+) as a cofactor. Mn(2+) is required as a cofactor.

It localises to the cytoplasm. The catalysed reaction is acetate + ATP = acetyl phosphate + ADP. Its pathway is metabolic intermediate biosynthesis; acetyl-CoA biosynthesis; acetyl-CoA from acetate: step 1/2. In terms of biological role, catalyzes the formation of acetyl phosphate from acetate and ATP. Can also catalyze the reverse reaction. This Aliivibrio fischeri (strain ATCC 700601 / ES114) (Vibrio fischeri) protein is Acetate kinase 1.